An 84-amino-acid polypeptide reads, in one-letter code: MKMRVHLLAVSVLLVVLALQTTPAEADINSEMATCACQLIYRPVCASNNESYSNECVLKCASETPTGRSIGLHKVKDGNCNGEF.

A signal peptide spans 1-26 (MKMRVHLLAVSVLLVVLALQTTPAEA). One can recognise a Kazal-like domain in the interval 29-82 (NSEMATCACQLIYRPVCASNNESYSNECVLKCASETPTGRSIGLHKVKDGNCNG). Disulfide bonds link C35–C60, C37–C56, and C45–C80. The N-linked (GlcNAc...) asparagine glycan is linked to N49.

As to quaternary structure, interacts with human ELANE.

It localises to the secreted. Functions as a slow and tight inhibitor of host neutrophil elastase (ELANE). Inhibits host proteinase 3 (PRTN3) and chymotrypsin. Does not inhibit other host proteases involved in coagulation or inflammation, such as cathepsin G (CTSG), trypsin, chymase, matriptase, beta-tryptase, kallikrein, urokinase-type plasminogen activator (PLAU), coagulation factors Xa (F10), XIa (F11), XIIa (F12), plasmin (PLG), thrombin (F2) and tissue-type plasminogen activator (PLAT). Inhibits host neutrophil chemotaxis induced by N-formylmethionine-leucyl-phenylalanine (fMLP) in vitro. Inhibits ELANE-mediated potentiation of platelet aggregation induced by CTSG in the host. Does not affect CTSG- or collagen-induced platelet aggregation. Blocks cleavage of tissue factor pathway inhibitor (TFPI) by ELANE in the host. Inhibits neutrophil-induced coagulation in the host by interfering with neutrophil extracellular traps (NET) formation. Exhibits anti-inflammatory activity. Reduces ischemia-induced activation of MAPK and NF-kappa-B pathways in the host. Decreases CCL2 and IL8 production in IL4- or lipopolysaccharide (LPS)-stimulated host epithelial cells. Reduces caspase-3 (CASP3)-dependent apoptosis in damaged host tissues. In Anopheles gambiae (African malaria mosquito), this protein is Agaphelin.